The following is a 388-amino-acid chain: tRNA (guanine-N(7)-)-methyltransferase (388 aa).

Residues E129, E154, and D181 each coordinate S-adenosyl-L-methionine. K207 and D237 together coordinate substrate.

It belongs to the class I-like SAM-binding methyltransferase superfamily. TrmB family.

It catalyses the reaction guanosine(46) in tRNA + S-adenosyl-L-methionine = N(7)-methylguanosine(46) in tRNA + S-adenosyl-L-homocysteine. It participates in tRNA modification; N(7)-methylguanine-tRNA biosynthesis. Its function is as follows. Catalyzes the formation of N(7)-methylguanine at position 46 (m7G46) in tRNA. In Wolinella succinogenes (strain ATCC 29543 / DSM 1740 / CCUG 13145 / JCM 31913 / LMG 7466 / NCTC 11488 / FDC 602W) (Vibrio succinogenes), this protein is tRNA (guanine-N(7)-)-methyltransferase.